An 85-amino-acid polypeptide reads, in one-letter code: MKMTLIAILTCAAVLVLHTTAAEELEAESQLMEVGMPDTELEAVDEERLFECSVSCEIEKEGNKDCKKKKCKGGWKCKFNMCVEV.

The signal sequence occupies residues 1–22 (MKMTLIAILTCAAVLVLHTTAA). The propeptide occupies 23 to 48 (EELEAESQLMEVGMPDTELEAVDEER). Disulfide bonds link cysteine 52/cysteine 66, cysteine 56/cysteine 77, and cysteine 71/cysteine 82.

The protein belongs to the neurotoxin 12 (Hwtx-2) family. 02 (Hwtx-2) subfamily. In terms of tissue distribution, expressed by the venom gland.

The protein localises to the secreted. In terms of biological role, postsynaptic neurotoxin. This is U4-theraphotoxin-Hhn1u from Cyriopagopus hainanus (Chinese bird spider).